Reading from the N-terminus, the 506-residue chain is Gallate 1-beta-glucosyltransferase 84A23 (506 aa).

Catalysis depends on histidine 20, which acts as the Proton acceptor. Histidine 20 contributes to the an anthocyanidin binding site. Residues glutamine 345, histidine 360, tryptophan 363, asparagine 364, serine 365, and glutamate 368 each coordinate UDP-alpha-D-glucose. Residue glycine 383 participates in an anthocyanidin binding. Positions 384 and 385 each coordinate UDP-alpha-D-glucose.

The protein belongs to the UDP-glycosyltransferase family. Expressed in roots of the seedlings.

The protein localises to the cytoplasm. It catalyses the reaction 3,4,5-trihydroxybenzoate + UDP-alpha-D-glucose = 1-O-galloyl-beta-D-glucose + UDP. The enzyme catalyses 3,4-dihydroxybenzoate + UDP-alpha-D-glucose = 1-O-(3,4-dihydroxy-benzoyl)-beta-D-glucose + UDP. The catalysed reaction is 4-hydroxybenzoate + UDP-alpha-D-glucose = 4-(beta-D-glucosyloxy)benzoate + UDP + H(+). It carries out the reaction (E)-cinnamate + UDP-alpha-D-glucose = 1-O-(trans-cinnamoyl)-beta-D-glucose + UDP. It catalyses the reaction (E)-sinapate + UDP-alpha-D-glucose = 1-O-(trans-sinapoyl)-beta-D-glucose + UDP. The enzyme catalyses (E)-4-coumarate + UDP-alpha-D-glucose = 1-O-(trans-4-coumaroyl)-beta-D-glucose + UDP. The catalysed reaction is (E)-caffeate + UDP-alpha-D-glucose = 1-O-[(E)-caffeoyl]-beta-D-glucose + UDP. It carries out the reaction (E)-ferulate + UDP-alpha-D-glucose = 1-O-[(E)-feruloyl]-beta-D-glucose + UDP. It catalyses the reaction genistein + UDP-alpha-D-glucose = genistein 7-O-beta-D-glucoside + UDP + H(+). The enzyme catalyses apigenin + UDP-alpha-D-glucose = apigenin 7-O-beta-D-glucoside + UDP + H(+). The catalysed reaction is luteolin + UDP-alpha-D-glucose = luteolin 7-O-beta-D-glucoside + UDP + H(+). Its function is as follows. Glucosyltransferase that catalyzes the formation of 1-O-beta-D-glucose esters with hydroxybenzoic acids and cinnamic acid including its derivatives as preferred glucosyl acceptors. Has significant activity with gallic acid (3,4,5-trihydroxybenzoic acid), 3,4-dihydroxybenzoic acid, 4-hydroxybenzoic acid, cinnamic acid, sinapic acid, coumaric acid, caffeic acid and ferulic acid in vitro. Gallic acid is the predicted native substrate of the enzyme, which thus catalyzes the formation of 1-O-galloyl-beta-D-glucose, the first committed step of hydrolyzable tannins (HTs) biosynthesis, with punicalagin isomers being the major HTs of pomegranate. Catalyzes the formation of flavonoid glucosides with genistein, apigenin and luteolin in vitro. Has low activity with benzoic acid, 2-hydroxybenzoic acid, 3-hydroxybenzoic acid, 2,4-dihydroxybenzoic acid, naringenin and quercetin. No activity with catechol, resveratrol, chlorogenic acid, catechin and epicatechin (building blocks of proanthocyanidins) or cyanidin, delphinidin and pelargonidin (the three anthocyanidins). In Punica granatum (Pomegranate), this protein is Gallate 1-beta-glucosyltransferase 84A23.